The chain runs to 390 residues: Glutamate 5-kinase (390 aa).

Lys29 serves as a coordination point for ATP. Substrate is bound by residues Ser69, Asp156, and Asn168. 188–189 lines the ATP pocket; it reads TD. One can recognise a PUA domain in the interval 295–374; the sequence is SGSLIVDAGA…EQFDRILGNN (80 aa).

The protein belongs to the glutamate 5-kinase family.

The protein resides in the cytoplasm. The catalysed reaction is L-glutamate + ATP = L-glutamyl 5-phosphate + ADP. Its pathway is amino-acid biosynthesis; L-proline biosynthesis; L-glutamate 5-semialdehyde from L-glutamate: step 1/2. Functionally, catalyzes the transfer of a phosphate group to glutamate to form L-glutamate 5-phosphate. This is Glutamate 5-kinase from Psychrobacter cryohalolentis (strain ATCC BAA-1226 / DSM 17306 / VKM B-2378 / K5).